The sequence spans 1831 residues: Transmembrane protein 131 homolog (1831 aa).

The first 29 residues, 1–29 (MVPSIHKTSNRYRTIYFFLISLLITSTFA), serve as a signal peptide directing secretion. Residues 30-1169 (DQQAWPLPEE…QALPRPPFEN (1140 aa)) are Lumenal-facing. The papD-L domain stretch occupies residues 118–294 (EMDPPMMDFG…QSKQIATLVL (177 aa)). Residues 1170 to 1190 (IMYYSCVTALIFCLVCVLACA) form a helical membrane-spanning segment. Topologically, residues 1191–1831 (YLEGDRAIAV…TDNENDEKNN (641 aa)) are cytoplasmic. The span at 1223-1234 (STTTPVPTVPST) shows a compositional bias: low complexity. Disordered regions lie at residues 1223 to 1252 (STTTPVPTVPSTAKPESSIKKPTPATRPST), 1325 to 1516 (GQQK…PTDD), 1663 to 1759 (QMKR…VSNP), and 1800 to 1831 (WSSSSLFHPPTQQPSTSQMPQDTDNENDEKNN). Acidic residues predominate over residues 1338–1349 (PEFDEVEEEELA). Low complexity-rich tracts occupy residues 1394 to 1407 (PIIVQPVVQSPPVQ) and 1435 to 1448 (QVPPVTKTPVTPKT). Positions 1455 to 1467 (EPEKPIKPSEQKK) are enriched in basic and acidic residues. The segment covering 1480–1497 (TPSKARTPSKTPSQSNRA) has biased composition (polar residues). Over residues 1500-1514 (PASSPAPIAPTSAPT) the composition is skewed to low complexity. Composition is skewed to polar residues over residues 1669-1687 (SPSQASSTLSRKLENSPQK), 1702-1733 (NQSSSSALNPNYDFTRTPGNPNRMQMSQNSIQ), and 1742-1758 (WGDNSNSDPWGTNTVSN). Residues 1808 to 1820 (PPTQQPSTSQMPQ) show a composition bias toward low complexity. Positions 1822-1831 (TDNENDEKNN) are enriched in acidic residues.

It belongs to the TMEM131 family. May interact (via PapD-L domain) with collagen proteins (via C-terminus); the interaction is direct and is involved in assembly and secretion of collagen. Predominantly expressed in the intestine and hypodermis.

The protein resides in the membrane. The protein localises to the endoplasmic reticulum membrane. Functionally, collagen binding transmembrane protein involved in collagen secretion, probably by recruiting the ER-to-Golgi transport complex TRAPPIII. Required for normal development. This chain is Transmembrane protein 131 homolog, found in Caenorhabditis elegans.